The chain runs to 788 residues: Endonuclease MutS2 (788 aa).

334-341 serves as a coordination point for ATP; it reads GPNTGGKT. The region spanning 713–788 is the Smr domain; the sequence is LDLRGKRYEE…GNGATVVKFQ (76 aa).

Belongs to the DNA mismatch repair MutS family. MutS2 subfamily. In terms of assembly, homodimer. Binds to stalled ribosomes, contacting rRNA.

Functionally, endonuclease that is involved in the suppression of homologous recombination and thus may have a key role in the control of bacterial genetic diversity. In terms of biological role, acts as a ribosome collision sensor, splitting the ribosome into its 2 subunits. Detects stalled/collided 70S ribosomes which it binds and splits by an ATP-hydrolysis driven conformational change. Acts upstream of the ribosome quality control system (RQC), a ribosome-associated complex that mediates the extraction of incompletely synthesized nascent chains from stalled ribosomes and their subsequent degradation. Probably generates substrates for RQC. This Enterococcus faecalis (strain ATCC 700802 / V583) protein is Endonuclease MutS2.